We begin with the raw amino-acid sequence, 111 residues long: Large ribosomal subunit protein uL23 (111 aa).

The protein belongs to the universal ribosomal protein uL23 family. As to quaternary structure, part of the 50S ribosomal subunit. Contacts protein L29, and trigger factor when it is bound to the ribosome.

Functionally, one of the early assembly proteins it binds 23S rRNA. One of the proteins that surrounds the polypeptide exit tunnel on the outside of the ribosome. Forms the main docking site for trigger factor binding to the ribosome. This chain is Large ribosomal subunit protein uL23, found in Chlamydia muridarum (strain MoPn / Nigg).